We begin with the raw amino-acid sequence, 250 residues long: MTLSKITSIAGLLASASLVAGHGFVSGIVADGKYYGGYLVNQYPYMSNPPDTIAWSTTATDLGFVDGTGYQSPDIICHRDAKNGKLTATVAAGSQIEFQWTTWPESHHGPLITYLAPCNGDCATVDKTTLKFVKIAAQGLIDGSNPPGVWADDEMIANNNTATVTIPASYAPGNYVLRHEIIALHSAGNLNGAQNYPQCFNIQITGGGSAQGSGTAGTSLYKNTDPGIKFDIYSDLSGGYPIPGPALFNA.

The N-terminal stretch at 1 to 21 (MTLSKITSIAGLLASASLVAG) is a signal peptide. Residues His22 and His107 each coordinate Cu(2+). Position 22 is a methylhistidine (His22). 2 disulfide bridges follow: Cys77-Cys199 and Cys118-Cys122. An N-linked (GlcNAc...) asparagine glycan is attached at Asn159. O2 contacts are provided by His185 and Gln194. Tyr196 contributes to the Cu(2+) binding site.

It belongs to the polysaccharide monooxygenase AA9 family. Cu(2+) is required as a cofactor. Post-translationally, the catalytically essential N-terminal histidine His-22 is post-translationally modified by methylation to prevent protonation of the histidine side chain, and protect the critical active site of the enzyme from oxidative damage.

It localises to the secreted. It carries out the reaction [(1-&gt;4)-beta-D-glucosyl]n+m + reduced acceptor + O2 = 4-dehydro-beta-D-glucosyl-[(1-&gt;4)-beta-D-glucosyl]n-1 + [(1-&gt;4)-beta-D-glucosyl]m + acceptor + H2O.. Lytic polysaccharide monooxygenase (LPMO) that depolymerizes crystalline and amorphous polysaccharides via the oxidation of scissile alpha- or beta-(1-4)-glycosidic bonds, yielding C1 and C4 oxidation products. Catalysis by LPMOs requires the reduction of the active-site copper from Cu(II) to Cu(I) by a reducing agent and H(2)O(2) or O(2) as a cosubstrate. Shows activity on phosphoric acid swollen cellulose, on NaOH pretreated soy spent flakes as well as on crystalline cellulose (Avicel). Does not have a positive effect on cel6A activity, but acts synergistically with endoglucanase egl7. This Aspergillus fumigatus (strain ATCC MYA-4609 / CBS 101355 / FGSC A1100 / Af293) (Neosartorya fumigata) protein is AA9 family lytic polysaccharide monooxygenase B.